Consider the following 629-residue polypeptide: Glycerol-3-phosphate dehydrogenase SDP6, mitochondrial (629 aa).

A mitochondrion-targeting transit peptide spans 1–48 (MSLASIRRLAAGAAVIAAASGGAVYLSPSVASSDKGGGPILDSLRRRL). Residue 75 to 103 (DVLVIGGGATGSGVALDAVTRGLRVGLVE) participates in FAD binding.

It belongs to the FAD-dependent glycerol-3-phosphate dehydrogenase family. The cofactor is FAD. As to expression, expressed in germinating seedlings. Also detected in roots, leaves, flowers, developing siliques and germinating seeds.

It is found in the mitochondrion inner membrane. The enzyme catalyses a quinone + sn-glycerol 3-phosphate = dihydroxyacetone phosphate + a quinol. The protein operates within polyol metabolism; glycerol degradation via glycerol kinase pathway; glycerone phosphate from sn-glycerol 3-phosphate (anaerobic route): step 1/1. Its function is as follows. Required for glycerol catabolism and involved in NADH/NAD(+) homeostasis. Essential for postgerminative growth and seedling establishment. In Arabidopsis thaliana (Mouse-ear cress), this protein is Glycerol-3-phosphate dehydrogenase SDP6, mitochondrial.